A 156-amino-acid polypeptide reads, in one-letter code: Small ribosomal subunit protein uS7 (156 aa).

Belongs to the universal ribosomal protein uS7 family. In terms of assembly, part of the 30S ribosomal subunit. Contacts proteins S9 and S11.

In terms of biological role, one of the primary rRNA binding proteins, it binds directly to 16S rRNA where it nucleates assembly of the head domain of the 30S subunit. Is located at the subunit interface close to the decoding center, probably blocks exit of the E-site tRNA. The protein is Small ribosomal subunit protein uS7 of Mycolicibacterium vanbaalenii (strain DSM 7251 / JCM 13017 / BCRC 16820 / KCTC 9966 / NRRL B-24157 / PYR-1) (Mycobacterium vanbaalenii).